Here is a 357-residue protein sequence, read N- to C-terminus: Trans-resveratrol di-O-methyltransferase (357 aa).

S-adenosyl-L-methionine is bound by residues G200, D223, D243, M244, and K257. H261 functions as the Proton acceptor in the catalytic mechanism.

The protein belongs to the class I-like SAM-binding methyltransferase superfamily. Cation-independent O-methyltransferase family. COMT subfamily.

The enzyme catalyses trans-resveratrol + 2 S-adenosyl-L-methionine = pterostilbene + 2 S-adenosyl-L-homocysteine + 2 H(+). In terms of biological role, catalyzes the biosynthesis of pterostilbene from resveratrol. Pterostilbene has both antifungal and pharmacological properties. Also has activity toward resveratrol monomethyl ether (RME). The polypeptide is Trans-resveratrol di-O-methyltransferase (ROMT) (Vitis vinifera (Grape)).